Reading from the N-terminus, the 1198-residue chain is Fibronectin type-III domain-containing protein 3A (1198 aa).

The tract at residues 160–221 (YGDVDAHSTH…PSPINEHNGL (62 aa)) is disordered. The segment covering 163–201 (VDAHSTHGRSNFRDERSSKTYERLQKKLKDRQGTQKDKM) has biased composition (basic and acidic residues). A compositionally biased stretch (low complexity) spans 202–214 (SSPPSSPQKCPSP). 3 positions are modified to phosphoserine: serine 203, serine 207, and serine 213. Fibronectin type-III domains are found at residues 268-369 (NIVK…TLSC), 373-465 (IPNP…TSGC), 469-562 (MPAS…TCPD), 566-660 (IPVK…TPAV), 664-757 (PCLP…TAPG), 761-851 (QCKP…TPPS), 861-950 (EISD…TKPL), 951-1045 (PPDP…TPKS), and 1046-1151 (VPAA…TEPP). Lysine 384 is subject to N6-acetyllysine. The helical transmembrane segment at 1177–1197 (ILVLFAFFSILIAFIIQYFVI) threads the bilayer.

Belongs to the FNDC3 family. Expressed in the odontoblast and nerves in the dental pulp. Also expressed in trachea and to a lesser extent in the brain, liver, lung and kidney.

It is found in the golgi apparatus membrane. Its function is as follows. Mediates spermatid-Sertoli adhesion during spermatogenesis. The protein is Fibronectin type-III domain-containing protein 3A (FNDC3A) of Homo sapiens (Human).